The primary structure comprises 547 residues: MDTSKDLICIGFEGTAEKTGVGIITSKGEVLFNKTIIYTPPVQGIHPREAADHHAETFVKLLKEALTVVPIEKIDLVSFSLGPGLGPSLRVTATTARALSLSINKPIIGVNHCISHVEIGKLKTDAVDPLTLYVSGGNTQVLAYTGKKYRVIGETLDIAIGNCLDQFARHCNMPHPGGVYVEKYAKDGNKFMKLPYTVKGMDISLSGLLTAAMKKYDSKERIEDVCYSLQETSFSMLTEITERALAHTNKAEVMLVGGVAANNRLKEMLDVMCSEQNVDFYVPEREFCGDNGAMIAWLGILQYLNGKRMDLADTKPISNYRSDMVEVNWIHEENNNSENGNIKSRIIPEHLIGKGAEADISKGRYLEFESITKERVKKGYRTSELDELIRMRRTVKEARFLAAIKELGIYAPSIFDIDKENKKIAMSYIHGKIAKEKIEEGSIDFCEDLGKIIGKMHVGGIVHNDLTTSNFIVSDNTFVIDFGLGKYSDLVEDKAIDLIVLKKSIMSIHYDKFDRVWNKIVEGYKTYNLAESVLECMKEVEKRARYL.

A kae1 region spans residues 1–329 (MDTSKDLICI…YRSDMVEVNW (329 aa)). Fe cation contacts are provided by H112, H116, and Y133. L-threonylcarbamoyladenylate-binding positions include 133-137 (YVSGG), D165, G178, E182, and N262. D290 contacts Fe cation. A Protein kinase domain is found at 346 to 547 (IIPEHLIGKG…KEVEKRARYL (202 aa)). ATP is bound by residues 352–360 (IGKGAEADI) and K373. Residue D465 is the Proton acceptor; for kinase activity of the active site.

The protein in the N-terminal section; belongs to the KAE1 / TsaD family. This sequence in the C-terminal section; belongs to the protein kinase superfamily. Tyr protein kinase family. BUD32 subfamily. As to quaternary structure, component of the KEOPS complex that consists of Kae1, Bud32, Cgi121 and Pcc1; the whole complex dimerizes. The cofactor is Fe(2+).

Its subcellular location is the cytoplasm. It carries out the reaction L-seryl-[protein] + ATP = O-phospho-L-seryl-[protein] + ADP + H(+). It catalyses the reaction L-threonyl-[protein] + ATP = O-phospho-L-threonyl-[protein] + ADP + H(+). The catalysed reaction is L-threonylcarbamoyladenylate + adenosine(37) in tRNA = N(6)-L-threonylcarbamoyladenosine(37) in tRNA + AMP + H(+). Functionally, required for the formation of a threonylcarbamoyl group on adenosine at position 37 (t(6)A37) in tRNAs that read codons beginning with adenine. Is a component of the KEOPS complex that is probably involved in the transfer of the threonylcarbamoyl moiety of threonylcarbamoyl-AMP (TC-AMP) to the N6 group of A37. The Kae1 domain likely plays a direct catalytic role in this reaction. The Bud32 domain probably displays kinase activity that regulates Kae1 function. This chain is Probable bifunctional tRNA threonylcarbamoyladenosine biosynthesis protein, found in Methanococcus maripaludis (strain C7 / ATCC BAA-1331).